Reading from the N-terminus, the 482-residue chain is G2/mitotic-specific cyclin cdc13 (482 aa).

Composition is skewed to polar residues over residues 35 to 55 (LHSS…STNV), 78 to 92 (SKNT…SVST), and 118 to 140 (SVFN…SVST). The segment at 35 to 140 (LHSSENSLVN…LSTKSHSVST (106 aa)) is disordered. The region spanning 206–332 (DIFEYLNELE…ILRVLEFNLA (127 aa)) is the Cyclin N-terminal domain.

Belongs to the cyclin family. Cyclin AB subfamily. As to quaternary structure, interacts with cdc2. Interacts with rum1. Associates with microtubules. Also interacts with cdc11.

The protein localises to the nucleus. It localises to the cytoplasm. It is found in the cytoskeleton. The protein resides in the microtubule organizing center. Its subcellular location is the spindle pole body. In terms of biological role, essential for the control of the cell cycle at the G2/M (mitosis) transition. Interacts with the cdc2 protein kinase to form MPF. G2/M cyclins accumulate steadily during G2 and are abruptly destroyed at mitosis. Involved in the reorganization of the cytoskeleton on transition from G2 to mitosis. Association with rum1 promotes its proteolysis during G1. Also essential for initiation of meiosis II. In Schizosaccharomyces pombe (strain 972 / ATCC 24843) (Fission yeast), this protein is G2/mitotic-specific cyclin cdc13.